A 693-amino-acid chain; its full sequence is Elongation factor G 1 (693 aa).

The region spanning 4–281 (NKLRNIGISA…AVTRFLPSPH (278 aa)) is the tr-type G domain. Residues 13–20 (AHIDSGKT), 80–84 (DTPGH), and 134–137 (NKCD) contribute to the GTP site.

The protein belongs to the TRAFAC class translation factor GTPase superfamily. Classic translation factor GTPase family. EF-G/EF-2 subfamily.

It localises to the cytoplasm. Its function is as follows. Catalyzes the GTP-dependent ribosomal translocation step during translation elongation. During this step, the ribosome changes from the pre-translocational (PRE) to the post-translocational (POST) state as the newly formed A-site-bound peptidyl-tRNA and P-site-bound deacylated tRNA move to the P and E sites, respectively. Catalyzes the coordinated movement of the two tRNA molecules, the mRNA and conformational changes in the ribosome. This chain is Elongation factor G 1, found in Borrelia garinii subsp. bavariensis (strain ATCC BAA-2496 / DSM 23469 / PBi) (Borreliella bavariensis).